The following is a 104-amino-acid chain: DET1- and DDB1-associated protein 1 (104 aa).

Residues 67–77 show a composition bias toward basic and acidic residues; it reads KKNAAKKREQE. The interval 67-104 is disordered; that stretch reads KKNAAKKREQEQAEGEGGSPAPPRKIARTDSQEMNEDS.

It belongs to the DDA1 family. Component of numerous DCX (DDB1-CUL4-X-box) E3 ubiquitin-protein ligase complexes which consist of a core of DDB1, cullin-4 (CUL4A or CUL4B), DDA1 and RBX1.

The protein operates within protein modification; protein ubiquitination. Functionally, functions as a component of numerous distinct DCX (DDB1-CUL4-X-box) E3 ubiquitin-protein ligase complexes which mediate the ubiquitination and subsequent proteasomal degradation of target proteins. In the DCX complexes, acts as a scaffolding subunit required to stabilize the complex. The chain is DET1- and DDB1-associated protein 1 from Danio rerio (Zebrafish).